A 203-amino-acid polypeptide reads, in one-letter code: Peptidyl-tRNA hydrolase (203 aa).

Tyr-14 contacts tRNA. His-19 functions as the Proton acceptor in the catalytic mechanism. Residues Tyr-64, Asn-66, and Asn-112 each contribute to the tRNA site.

It belongs to the PTH family. In terms of assembly, monomer.

Its subcellular location is the cytoplasm. It carries out the reaction an N-acyl-L-alpha-aminoacyl-tRNA + H2O = an N-acyl-L-amino acid + a tRNA + H(+). Hydrolyzes ribosome-free peptidyl-tRNAs (with 1 or more amino acids incorporated), which drop off the ribosome during protein synthesis, or as a result of ribosome stalling. Its function is as follows. Catalyzes the release of premature peptidyl moieties from peptidyl-tRNA molecules trapped in stalled 50S ribosomal subunits, and thus maintains levels of free tRNAs and 50S ribosomes. This Methylobacterium sp. (strain 4-46) protein is Peptidyl-tRNA hydrolase.